The primary structure comprises 920 residues: GTPase activating protein homolog 1 (920 aa).

The span at 65 to 87 shows a compositional bias: low complexity; that stretch reads NLGGLSNDSTNNNSNSNNTIDSS. The tract at residues 65-91 is disordered; it reads NLGGLSNDSTNNNSNSNNTIDSSKPLS. Residues 90–344 enclose the F-BAR domain; that stretch reads LSFENDMSDG…FVDIIDPEVD (255 aa). Residues 184-276 are a coiled coil; sequence LNEAIKDMEK…EDEYKEQINE (93 aa). Positions 403–449 are enriched in low complexity; the sequence is TNTITSQSGSTIISNGASQPIEIPSPQPISEQQQIPPQQQQQQQQAQ. Disordered regions lie at residues 403 to 468 and 490 to 518; these read TNTI…PMGR and STSSLLTKDGNSTTSSNTSTSNSNQLSKS. Polar residues predominate over residues 450–468; sequence VPPTSINQSSSPPVNPMGR. The span at 490–513 shows a compositional bias: low complexity; sequence STSSLLTKDGNSTTSSNTSTSNSN. The Rho-GAP domain occupies 533-716; it reads VELEVLIEND…NMIIDSLETK (184 aa). A disordered region spans residues 727 to 836; it reads PIIPDDENSD…VSSNGNNINS (110 aa). Positions 730–741 are enriched in acidic residues; the sequence is PDDENSDDDDDD. Residues 757–836 are compositionally biased toward low complexity; sequence NDINTTNINN…VSSNGNNINS (80 aa).

Its subcellular location is the cytoplasm. The protein resides in the contractile vacuole. In terms of biological role, rho GTPase-activating protein involved in the signal transduction pathway. Regulator of the contractile vacuole network as well as involved in driving vacuole emptying. The protein is GTPase activating protein homolog 1 (mgp1) of Dictyostelium discoideum (Social amoeba).